Reading from the N-terminus, the 475-residue chain is UDP-N-acetylmuramate--L-alanine ligase (475 aa).

118–124 (GTHGKTT) contributes to the ATP binding site.

The protein belongs to the MurCDEF family.

Its subcellular location is the cytoplasm. It carries out the reaction UDP-N-acetyl-alpha-D-muramate + L-alanine + ATP = UDP-N-acetyl-alpha-D-muramoyl-L-alanine + ADP + phosphate + H(+). The protein operates within cell wall biogenesis; peptidoglycan biosynthesis. Cell wall formation. This chain is UDP-N-acetylmuramate--L-alanine ligase, found in Thermosynechococcus vestitus (strain NIES-2133 / IAM M-273 / BP-1).